The primary structure comprises 72 residues: Translation initiation factor IF-1 (72 aa).

In terms of domain architecture, S1-like spans 1–72 (MAKEESIEIE…TKGRITYRYK (72 aa)).

This sequence belongs to the IF-1 family. As to quaternary structure, component of the 30S ribosomal translation pre-initiation complex which assembles on the 30S ribosome in the order IF-2 and IF-3, IF-1 and N-formylmethionyl-tRNA(fMet); mRNA recruitment can occur at any time during PIC assembly.

It is found in the cytoplasm. Its function is as follows. One of the essential components for the initiation of protein synthesis. Stabilizes the binding of IF-2 and IF-3 on the 30S subunit to which N-formylmethionyl-tRNA(fMet) subsequently binds. Helps modulate mRNA selection, yielding the 30S pre-initiation complex (PIC). Upon addition of the 50S ribosomal subunit IF-1, IF-2 and IF-3 are released leaving the mature 70S translation initiation complex. The sequence is that of Translation initiation factor IF-1 from Chlorobium chlorochromatii (strain CaD3).